A 349-amino-acid polypeptide reads, in one-letter code: uncharacterized protein (349 aa).

This is an uncharacterized protein from Escherichia coli (strain K12).